We begin with the raw amino-acid sequence, 165 residues long: PTS system glucose-specific EIIA component (165 aa).

The 105-residue stretch at 34-138 folds into the PTS EIIA type-1 domain; the sequence is DPVFAQKMMG…SSITPIIISN (105 aa). Residues H71 and H86 each contribute to the Zn(2+) site. H86 acts as the Tele-phosphohistidine intermediate; for EIIA activity in catalysis. H86 is modified (phosphohistidine; by HPr).

In terms of assembly, heterodimer with glycerol kinase (glpk). The cofactor is Zn(2+).

It is found in the cytoplasm. The phosphoenolpyruvate-dependent sugar phosphotransferase system (sugar PTS), a major carbohydrate active transport system, catalyzes the phosphorylation of incoming sugar substrates concomitantly with their translocation across the cell membrane. The enzyme II complex composed of PtsG and Crr is involved in glucose transport. The sequence is that of PTS system glucose-specific EIIA component (crr) from Oceanobacillus iheyensis (strain DSM 14371 / CIP 107618 / JCM 11309 / KCTC 3954 / HTE831).